The chain runs to 372 residues: Probable leucine aminopeptidase MCYG_03459 (372 aa).

The first 18 residues, 1 to 18 (MKISTLAVVSAFAVTAIA), serve as a signal peptide directing secretion. Asparagine 95 carries N-linked (GlcNAc...) asparagine glycosylation. Residues histidine 175 and aspartate 194 each coordinate Zn(2+). Asparagine 195 and asparagine 219 each carry an N-linked (GlcNAc...) asparagine glycan. Residues glutamate 233 and aspartate 260 each coordinate Zn(2+). Cysteine 305 and cysteine 309 form a disulfide bridge. Histidine 338 contributes to the Zn(2+) binding site.

This sequence belongs to the peptidase M28 family. M28E subfamily. Monomer. Requires Zn(2+) as cofactor.

The protein resides in the secreted. In terms of biological role, probable extracellular aminopeptidase which contributes to pathogenicity. This is Probable leucine aminopeptidase MCYG_03459 from Arthroderma otae (strain ATCC MYA-4605 / CBS 113480) (Microsporum canis).